We begin with the raw amino-acid sequence, 442 residues long: Meiotically up-regulated gene 191 protein (442 aa).

Thr361 is modified (phosphothreonine). A compositionally biased stretch (polar residues) spans Arg416–Gln429. A disordered region spans residues Arg416 to Ser442. The span at Gly433–Ser442 shows a compositional bias: basic and acidic residues.

Its subcellular location is the cytoplasm. The protein localises to the nucleus. Functionally, has a role in meiosis. In Schizosaccharomyces pombe (strain 972 / ATCC 24843) (Fission yeast), this protein is Meiotically up-regulated gene 191 protein (mug191).